Reading from the N-terminus, the 333-residue chain is Complement C1q and tumor necrosis factor-related protein 9A (333 aa).

The N-terminal stretch at 1–19 is a signal peptide; the sequence is MRIWWLLLAIEICTGNINS. 3 Collagen-like domains span residues 24-82, 95-154, and 155-191; these read RQGH…DGKV, GSPG…PGPM, and GPIG…GEKG. Residues 24–188 are disordered; it reads RQGHPGIPGN…GIRGWKGDRG (165 aa). Over residues 26–40 the composition is skewed to low complexity; that stretch reads GHPGIPGNPGHNGLP. 4-hydroxyproline occurs at positions 31, 34, and 40. The segment covering 42 to 57 has biased composition (basic and acidic residues); the sequence is RDGRDGAKGDKGDAGE. 4-hydroxyproline occurs at positions 58, 61, and 64. Residues 69-88 are compositionally biased toward basic and acidic residues; sequence TSGEKGERGADGKVEAKGIK. 5-hydroxylysine occurs at positions 73 and 127. Residues Lys73 and Lys127 are each glycosylated (O-linked (Gal...) hydroxylysine). 4-hydroxyproline is present on residues Pro151, Pro160, and Pro175. In terms of domain architecture, C1q spans 197-333; it reads LVLPKSAFTV…FTGFLLFSSP (137 aa).

In terms of assembly, multimers (predominantly trimers). Interacts with ADIPOQ via the C1q domain to form a heterotrimeric complex. Interacts with CTRP9B. Forms heterotrimers and heterooligomeric complexes with CTRP9B. In terms of tissue distribution, expressed predominantly in adipose tissue.

The protein resides in the secreted. In terms of biological role, probable adipokine. Activates AMPK, AKT, and p44/42 MAPK signaling pathways. In Homo sapiens (Human), this protein is Complement C1q and tumor necrosis factor-related protein 9A (C1QTNF9).